Here is a 126-residue protein sequence, read N- to C-terminus: MSQVSLSQQLKEGNLFAEQCPSREVLKHVTSRWGVLILVALREGTHRFSDLRRKIGGVSEKMLAQSLQALEQDGFLNRIAYPVVPPHVEYSLTPLGEQVSEKVAALADWIELNLPEVLAVRDERAA.

The 99-residue stretch at 20-118 folds into the HTH hxlR-type domain; it reads CPSREVLKHV…WIELNLPEVL (99 aa).

This is an uncharacterized protein from Escherichia coli (strain K12).